A 69-amino-acid chain; its full sequence is MKIEINENFCKGCDICIVVCPRGVFEKSKKLNKKGIYPPIPVNPEKCTKCNLCILQCPDQAISIELSQE.

2 consecutive 4Fe-4S ferredoxin-type domains span residues 2–30 (KIEI…KSKK) and 38–67 (PPIP…IELS). The [4Fe-4S] cluster site is built by C10, C13, C16, C20, C47, C50, C53, and C57.

Requires [4Fe-4S] cluster as cofactor.

This is an uncharacterized protein from Methanocaldococcus jannaschii (strain ATCC 43067 / DSM 2661 / JAL-1 / JCM 10045 / NBRC 100440) (Methanococcus jannaschii).